We begin with the raw amino-acid sequence, 557 residues long: Myo-inositol transporter 2 (557 aa).

At 1 to 76 the chain is on the cytoplasmic side; the sequence is MDFNNIPLAT…ENGEGFEAEK (76 aa). The tract at residues 24–69 is disordered; that stretch reads EMTTRPSETKKKVPFSEDMREIPSLPNEEEANATDPQANEVADENG. The segment covering 30-44 has biased composition (basic and acidic residues); it reads SETKKKVPFSEDMRE. A helical membrane pass occupies residues 77 to 97; that stretch reads ISSWIWVLSAVAGISGLLFGY. At 98-99 the chain is on the extracellular side; it reads DT. A helical transmembrane segment spans residues 100–120; it reads GVISGALAVLGSDLGHVLSSG. Residues 121–123 are Cytoplasmic-facing; the sequence is QKE. Residues 124-144 form a helical membrane-spanning segment; the sequence is LITSATSFAALISATTSGWLA. Residues 145–157 lie on the Extracellular side of the membrane; the sequence is DWVGRKRLLLCAD. Residues 158–178 traverse the membrane as a helical segment; it reads AIFVIGSVIMAASRNVAMMVV. Residues 179–180 lie on the Cytoplasmic side of the membrane; it reads GR. A helical membrane pass occupies residues 181–201; that stretch reads FIVGYGIGLTSLIVPMYITEL. At 202 to 209 the chain is on the extracellular side; the sequence is APARLRGR. A helical membrane pass occupies residues 210 to 230; the sequence is LVIIYVVFITGGQLIAYSLNA. Residues 231-240 are Cytoplasmic-facing; the sequence is AFEHVHQGWR. Residues 241 to 261 form a helical membrane-spanning segment; it reads IMFGIGAAPALGQLISLFWTP. Residues 262–367 lie on the Extracellular side of the membrane; the sequence is ESPRYLLRHN…IFQSVGFKNS (106 aa). Residues 368–388 traverse the membrane as a helical segment; the sequence is ISVSIVVGATNFVFTIVAFMF. Residues 389–396 lie on the Cytoplasmic side of the membrane; that stretch reads IDRIGRRR. The chain crosses the membrane as a helical span at residues 397–417; that stretch reads ILLCTSAVMIAGLALCAIAYH. Over 418-432 the chain is Extracellular; sequence FLPADTTQNTNSGWQ. A helical membrane pass occupies residues 433–453; the sequence is YVVLASIIIFLASYASGIGNI. The Cytoplasmic segment spans residues 454–468; the sequence is PWQQAELFPMEVRAL. Residues 469-489 form a helical membrane-spanning segment; the sequence is GAGFSTAINWVGNLIISASFL. At 490 to 498 the chain is on the extracellular side; it reads TMMESITPT. A helical membrane pass occupies residues 499 to 519; the sequence is GTFALFAGFCFVGLVTSYFTY. The Cytoplasmic portion of the chain corresponds to 520 to 557; it reads PELAGMSIENIHKLLEKGFWQAVKESTKRVRKGRIDEA.

It belongs to the major facilitator superfamily. Sugar transporter (TC 2.A.1.1) family.

It localises to the membrane. The catalysed reaction is myo-inositol(out) + H(+)(out) = myo-inositol(in) + H(+)(in). Functionally, transporter for myo-inositol. This chain is Myo-inositol transporter 2 (itr2), found in Schizosaccharomyces pombe (strain 972 / ATCC 24843) (Fission yeast).